The following is a 274-amino-acid chain: Diaminopimelate epimerase (274 aa).

Residues N11, Q44, and N64 each coordinate substrate. Residue C73 is the Proton donor of the active site. Substrate is bound by residues 74 to 75 (GN), N157, N190, and 208 to 209 (ER). The active-site Proton acceptor is C217. 218-219 (GS) is a substrate binding site.

The protein belongs to the diaminopimelate epimerase family. In terms of assembly, homodimer.

The protein localises to the cytoplasm. It catalyses the reaction (2S,6S)-2,6-diaminopimelate = meso-2,6-diaminopimelate. It functions in the pathway amino-acid biosynthesis; L-lysine biosynthesis via DAP pathway; DL-2,6-diaminopimelate from LL-2,6-diaminopimelate: step 1/1. Its function is as follows. Catalyzes the stereoinversion of LL-2,6-diaminopimelate (L,L-DAP) to meso-diaminopimelate (meso-DAP), a precursor of L-lysine and an essential component of the bacterial peptidoglycan. The protein is Diaminopimelate epimerase of Haemophilus ducreyi (strain 35000HP / ATCC 700724).